A 633-amino-acid chain; its full sequence is Extracellular metalloproteinase 5 (633 aa).

The first 21 residues, 1 to 21 (MHGLLLAAAGLLSLPLHVIAH), serve as a signal peptide directing secretion. Residues 22-245 (PQPSTNLAGR…HNVVDYVSHA (224 aa)) constitute a propeptide that is removed on maturation. Residue Asn286 is glycosylated (N-linked (GlcNAc...) asparagine). His428 serves as a coordination point for Zn(2+). Glu429 is an active-site residue. His432 provides a ligand contact to Zn(2+). Asn592 and Asn621 each carry an N-linked (GlcNAc...) asparagine glycan.

Belongs to the peptidase M36 family. Requires Zn(2+) as cofactor.

The protein resides in the secreted. Its function is as follows. Secreted metalloproteinase probably acting as a virulence factor. The sequence is that of Extracellular metalloproteinase 5 (MEP5) from Arthroderma benhamiae (Trichophyton mentagrophytes).